Reading from the N-terminus, the 132-residue chain is Small ribosomal subunit protein uS8 (132 aa).

This sequence belongs to the universal ribosomal protein uS8 family. As to quaternary structure, part of the 30S ribosomal subunit. Contacts proteins S5 and S12.

In terms of biological role, one of the primary rRNA binding proteins, it binds directly to 16S rRNA central domain where it helps coordinate assembly of the platform of the 30S subunit. In Geotalea daltonii (strain DSM 22248 / JCM 15807 / FRC-32) (Geobacter daltonii), this protein is Small ribosomal subunit protein uS8.